Here is a 62-residue protein sequence, read N- to C-terminus: Large ribosomal subunit protein bL33 (62 aa).

Belongs to the bacterial ribosomal protein bL33 family.

The protein is Large ribosomal subunit protein bL33 of Parabacteroides distasonis (strain ATCC 8503 / DSM 20701 / CIP 104284 / JCM 5825 / NCTC 11152).